The sequence spans 1262 residues: SCL-interrupting locus protein homolog (1262 aa).

Residues 1-992 are interaction with RBM14; the sequence is MNTRFPSSKM…IDSPTKVKKN (992 aa). The interaction with CPAP stretch occupies residues 220–762; sequence YKHGYITMDE…VSMEAQSSPG (543 aa). Disordered regions lie at residues 369-409, 454-551, and 650-670; these read RSSQ…QKIS, LCDA…LAPQ, and GGMGAYSPHSNGEPSPVAGPS. Polar residues-rich tracts occupy residues 473-493, 500-512, and 540-551; these read PTNQLSQDTALRQSRGKQSST, QFRNTNAKPSLSV, and TLDSRQPSLAPQ. Residues 567–760 form a PIN1-binding region; it reads PMELQVPTPS…ELVSMEAQSS (194 aa). 2 positions are modified to phosphoserine: Ser733 and Ser760. Disordered stretches follow at residues 782 to 804, 883 to 904, 925 to 959, and 1106 to 1129; these read NAAGDDQEPDSQPKQDDTKISSE, APTEGASNSTELPQGTKDEPYR, NASQETEEPPTKAVVTNRECAKTQNTHHARKKRHN, and SSDNSEDEEEPPSHADSESDHVLN. Basic and acidic residues predominate over residues 792–803; sequence SQPKQDDTKISS. Positions 883 to 895 are enriched in polar residues; that stretch reads APTEGASNSTELP. Positions 949 to 959 are enriched in basic residues; the sequence is NTHHARKKRHN. Ser1110 bears the Phosphoserine mark. Residues 1116-1128 show a composition bias toward basic and acidic residues; sequence PPSHADSESDHVL.

Homodimer. Interacts with PIN1 via its WW domain. This interaction is dependent on Stil mitotic phosphorylation. Interacts with CPAP. Interacts with RBM14 and this interaction interferes with the interaction of STIL with CPAP. Forms a complex with CPAP and SASS6. nteracts (via N-terminus) with CEP85; this interaction is essential for efficient centriolar targeting of STIL and subsequent PLK4 activation. In terms of processing, ubiquitinated. Post-translationally, phosphorylated following the activation of the mitotic checkpoint. As to expression, ubiquitously expressed in adult and fetal tissues. Highly expressed in hematopoietic tissues such as thymus, bone marrow and spleen.

The protein resides in the cytoplasm. It localises to the cytosol. Its subcellular location is the cytoskeleton. The protein localises to the microtubule organizing center. It is found in the centrosome. The protein resides in the centriole. It localises to the cell cortex. Immediate-early gene. Plays an important role in embryonic development as well as in cellular growth and proliferation; its long-term silencing affects cell survival and cell cycle distribution as well as decreases CDK1 activity correlated with reduced phosphorylation of CDK1. Plays a role as a positive regulator of the sonic hedgehog pathway, acting downstream of PTCH1. Plays an important role in the regulation of centriole duplication. Required for the onset of procentriole formation and proper mitotic progression. During procentriole formation, is essential for the correct loading of SASS6 and CPAP to the base of the procentriole to initiate procentriole assembly. In complex with STIL acts as a modulator of PLK4-driven cytoskeletal rearrangements and directional cell motility. In Mus musculus (Mouse), this protein is SCL-interrupting locus protein homolog (Stil).